We begin with the raw amino-acid sequence, 440 residues long: Chromosome partition protein MukF (440 aa).

A leucine-zipper region spans residues 208–236 (LSETSGTLRELQDTLEAAGDKLQANLLRI).

The protein belongs to the MukF family. Interacts, and probably forms a ternary complex, with MukE and MukB via its C-terminal region. The complex formation is stimulated by calcium or magnesium. It is required for an interaction between MukE and MukB.

The protein localises to the cytoplasm. Its subcellular location is the nucleoid. Functionally, involved in chromosome condensation, segregation and cell cycle progression. May participate in facilitating chromosome segregation by condensation DNA from both sides of a centrally located replisome during cell division. Not required for mini-F plasmid partitioning. Probably acts via its interaction with MukB and MukE. Overexpression results in anucleate cells. It has a calcium binding activity. This is Chromosome partition protein MukF from Salmonella agona (strain SL483).